Here is a 682-residue protein sequence, read N- to C-terminus: Potassium-transporting ATPase ATP-binding subunit (682 aa).

4 consecutive transmembrane segments (helical) span residues 34–54 (PVMF…LAMV), 58–78 (IAGS…TVLF), 219–239 (IALT…TATL), and 254–274 (VLVA…LSAI). D307 functions as the 4-aspartylphosphate intermediate in the catalytic mechanism. ATP-binding positions include D344, E348, 377–384 (FTAQSRMS), and K395. Residues D518 and D522 each coordinate Mg(2+). The next 3 helical transmembrane spans lie at 588–608 (FAII…LNVM), 616–636 (AILS…PLAL), and 662–682 (LVVP…LGLA).

It belongs to the cation transport ATPase (P-type) (TC 3.A.3) family. Type IA subfamily. As to quaternary structure, the system is composed of three essential subunits: KdpA, KdpB and KdpC.

Its subcellular location is the cell inner membrane. It carries out the reaction K(+)(out) + ATP + H2O = K(+)(in) + ADP + phosphate + H(+). Its function is as follows. Part of the high-affinity ATP-driven potassium transport (or Kdp) system, which catalyzes the hydrolysis of ATP coupled with the electrogenic transport of potassium into the cytoplasm. This subunit is responsible for energy coupling to the transport system and for the release of the potassium ions to the cytoplasm. The protein is Potassium-transporting ATPase ATP-binding subunit of Salmonella agona (strain SL483).